A 485-amino-acid polypeptide reads, in one-letter code: Glutamate--tRNA ligase (485 aa).

The short motif at 12–22 is the 'HIGH' region element; that stretch reads PSPTGYMHIGN. Residues 253–257 carry the 'KMSKS' region motif; that stretch reads KLSKR. Lysine 256 serves as a coordination point for ATP.

It belongs to the class-I aminoacyl-tRNA synthetase family. Glutamate--tRNA ligase type 1 subfamily. In terms of assembly, monomer.

Its subcellular location is the cytoplasm. The catalysed reaction is tRNA(Glu) + L-glutamate + ATP = L-glutamyl-tRNA(Glu) + AMP + diphosphate. Catalyzes the attachment of glutamate to tRNA(Glu) in a two-step reaction: glutamate is first activated by ATP to form Glu-AMP and then transferred to the acceptor end of tRNA(Glu). This is Glutamate--tRNA ligase from Clostridium acetobutylicum (strain ATCC 824 / DSM 792 / JCM 1419 / IAM 19013 / LMG 5710 / NBRC 13948 / NRRL B-527 / VKM B-1787 / 2291 / W).